A 192-amino-acid polypeptide reads, in one-letter code: ER membrane protein complex subunit 8/9 homolog (192 aa).

The MPN domain maps to 5–135 (ISITTEALSK…LVSIDKVGSD (131 aa)).

Belongs to the EMC8/EMC9 family.

The chain is ER membrane protein complex subunit 8/9 homolog from Dictyostelium discoideum (Social amoeba).